Consider the following 68-residue polypeptide: Large ribosomal subunit protein uL29 (68 aa).

This sequence belongs to the universal ribosomal protein uL29 family.

The polypeptide is Large ribosomal subunit protein uL29 (Wigglesworthia glossinidia brevipalpis).